Here is a 235-residue protein sequence, read N- to C-terminus: Sugar fermentation stimulation protein homolog (235 aa).

This sequence belongs to the SfsA family.

The sequence is that of Sugar fermentation stimulation protein homolog from Allorhizobium ampelinum (strain ATCC BAA-846 / DSM 112012 / S4) (Agrobacterium vitis (strain S4)).